A 413-amino-acid polypeptide reads, in one-letter code: Unsaturated 3S-rhamnoglycuronyl hydrolase (413 aa).

The N-terminal stretch at 1–21 is a signal peptide; sequence MNHTKLKLSAVALTLALGLSA. Residue Cys-22 is the site of N-palmitoyl cysteine attachment. A lipid anchor (S-diacylglycerol cysteine) is attached at Cys-22. Residue Asp-203 is the Proton donor of the active site.

It belongs to the glycosyl hydrolase 105 family.

The protein localises to the cell membrane. Glucuronyl hydrolase involved in ulvan degradation. Ulvan is the main polysaccharide component of the Ulvales (green seaweed) cell wall. It is composed of disaccharide building blocks comprising 3-sulfated rhamnose (Rha3S) linked to D-glucuronic acid (GlcA), L-iduronic acid (IduA), or D-xylose (Xyl). Unsaturated 3S-rhamnoglycuronyl hydrolase works together with ulvan lyases to fully degrade the ulvan polymer, catalyzing specifically the cleavage of the unsaturated 4-deoxy-L-threo-hex-4-enopyranosiduronic acid (deltaUA) of the deltaUA-oligosaccharides deltaUA-Rha3S, deltaUA-Rha3S-IduA-Rha3S and deltaUA-Rha3S-Xyl-Rha3S, the end products of the ulvan lyase reaction. The chain is Unsaturated 3S-rhamnoglycuronyl hydrolase from Alteromonas sp. (strain LOR).